A 64-amino-acid polypeptide reads, in one-letter code: Large ribosomal subunit protein bL28 (64 aa).

It belongs to the bacterial ribosomal protein bL28 family.

In Bifidobacterium adolescentis (strain ATCC 15703 / DSM 20083 / NCTC 11814 / E194a), this protein is Large ribosomal subunit protein bL28.